Here is a 294-residue protein sequence, read N- to C-terminus: Zinc finger protein CONSTANS-LIKE 3 (294 aa).

Zn(2+) is bound by residues C8, C11, C31, H36, C51, C54, C74, and H79. Residues 8–50 (CDSCKSTAATLFCRADAAFLCGDCDGKIHTANKLASRHERVWL) form a B box-type 1; atypical zinc finger. The segment at 51–93 (CEVCEQAPAHVTCKADAAALCVTCDRDIHSANPLSRRHERVPI) adopts a B box-type 2; atypical zinc-finger fold. The CCT domain maps to 229-271 (REARVLRYREKRKNRKFEKTIRYASRKAYAEMRPRIKGRFAKR).

It belongs to the CONSTANS family.

It localises to the nucleus. The polypeptide is Zinc finger protein CONSTANS-LIKE 3 (COL3) (Arabidopsis thaliana (Mouse-ear cress)).